An 86-amino-acid polypeptide reads, in one-letter code: Small ribosomal subunit protein bS20 (86 aa).

It belongs to the bacterial ribosomal protein bS20 family.

Functionally, binds directly to 16S ribosomal RNA. This Kineococcus radiotolerans (strain ATCC BAA-149 / DSM 14245 / SRS30216) protein is Small ribosomal subunit protein bS20.